The primary structure comprises 271 residues: Protein FAM110D (271 aa).

Disordered regions lie at residues 1–83 (MLLA…RPDS), 116–145 (PRDAAPSSPASTERPAASGGWAAPQDAPEA), and 186–245 (PQSW…PVSV). Basic residues predominate over residues 68 to 78 (RPVRRGSGRRL). Positions 116–126 (PRDAAPSSPAS) are enriched in low complexity. The segment covering 220-231 (SPGGAGGGGGSE) has biased composition (gly residues).

The protein belongs to the FAM110 family.

The protein is Protein FAM110D (FAM110D) of Homo sapiens (Human).